Reading from the N-terminus, the 402-residue chain is B3 domain-containing protein LFL1 (402 aa).

The tract at residues 1 to 174 is disordered; the sequence is MRGEERWQEQ…AAPRPSSHHT (174 aa). The span at 74-87 shows a compositional bias: low complexity; the sequence is ARPPTLAASAAAAS. A compositionally biased stretch (pro residues) spans 88 to 102; it reads SPPPPPPPPIPPLPP. Low complexity-rich tracts occupy residues 103-139 and 156-169; these read STST…AAVS and PRPA…APRP. Positions 181-284 form a DNA-binding region, TF-B3; the sequence is LQKELRYSDV…RFVIGAKKAG (104 aa). Positions 381-402 are disordered; it reads LHVTDDKSGHSLIPNPKSGPHM.

Expressed in anthers, pollen grains and young developing embryos.

Its subcellular location is the nucleus. Functionally, transcription repressor involved in flowering time regulation. Represses the flowering activator EHD1 by binding specifically to the DNA sequence 5'-CATGCATG-3 of its promoter. This Oryza sativa subsp. japonica (Rice) protein is B3 domain-containing protein LFL1 (LFL1).